Consider the following 918-residue polypeptide: Protein translocase subunit SecA (918 aa).

Residues Gln87, 105-109 (GEGKT), and Asp494 each bind ATP. Residues 863–883 (KQDDTSPKEYKKIGQEQRAEV) show a composition bias toward basic and acidic residues. Positions 863–918 (KQDDTSPKEYKKIGQEQRAEVDMFGNELKSNKTKPQVSSTTSSGGGSERRSSRRKK) are disordered.

This sequence belongs to the SecA family. As to quaternary structure, monomer and homodimer. Part of the essential Sec protein translocation apparatus which comprises SecA, SecYEG and auxiliary proteins SecDF. Other proteins may also be involved.

It is found in the cell inner membrane. It localises to the cytoplasm. It carries out the reaction ATP + H2O + cellular proteinSide 1 = ADP + phosphate + cellular proteinSide 2.. In terms of biological role, part of the Sec protein translocase complex. Interacts with the SecYEG preprotein conducting channel. Has a central role in coupling the hydrolysis of ATP to the transfer of proteins into and across the cell membrane, serving as an ATP-driven molecular motor driving the stepwise translocation of polypeptide chains across the membrane. The sequence is that of Protein translocase subunit SecA from Leptospira biflexa serovar Patoc (strain Patoc 1 / Ames).